Reading from the N-terminus, the 358-residue chain is Metacaspase-3 (358 aa).

The interval 1 to 84 is important for catalytic activity; the sequence is MGFDFGCLLK…APTHVSGTFR (84 aa). Active-site residues include His168 and Cys223.

This sequence belongs to the peptidase C14B family. Post-translationally, in epimastigotes, the unprocessed enzyme appears to be the main form. Auto-processing is dispensable for catalytic activity towards small oligopeptide substrates.

The protein localises to the cytoplasm. It is found in the nucleus. Its activity is regulated as follows. Activated by Ca(2+). Cysteine protease that cleaves specifically after arginine or lysine residues. In epimastigotes, may play a role in cell cycle G1/S transition. The chain is Metacaspase-3 from Trypanosoma cruzi (strain CL Brener).